We begin with the raw amino-acid sequence, 316 residues long: Annexin A13 (316 aa).

Gly-2 is lipidated: N-myristoyl glycine. 4 Annexin repeats span residues 14–85 (FDVD…ALLD), 86–157 (RPSE…SLLQ), 169–241 (DLAG…TLVR), and 245–316 (DQEG…ALLH).

Belongs to the annexin family. As to quaternary structure, monomer and homodimer. Detected in intestine, and at much lower levels also in kidney (at protein level).

It localises to the apical cell membrane. The protein resides in the cell membrane. It is found in the cytoplasmic vesicle. Binds to membranes enriched in phosphatidylserine or phosphatidylglycerol in a calcium-dependent manner. Half-maximal membrane binding requires about 60 uM calcium. Does not bind to membranes that lack phospholipids with an acidic headgroup. Its function is as follows. Binds to membranes enriched in phosphatidylserine or phosphatidylglycerol in a calcium-dependent manner, but requires higher calcium levels for membrane binding than isoform A. Half-maximal membrane binding requires about 320 uM calcium. May play a role in vesicular traffic to the apical plasma membrane. The protein is Annexin A13 (ANXA13) of Canis lupus familiaris (Dog).